The primary structure comprises 309 residues: Malate dehydrogenase (309 aa).

NAD(+) contacts are provided by residues glycine 10–glycine 15 and aspartate 34. 2 residues coordinate substrate: arginine 83 and arginine 89. NAD(+)-binding positions include asparagine 96 and valine 119 to asparagine 121. Positions 121 and 152 each coordinate substrate. The Proton acceptor role is filled by histidine 176.

Belongs to the LDH/MDH superfamily. MDH type 3 family.

The catalysed reaction is (S)-malate + NAD(+) = oxaloacetate + NADH + H(+). Its function is as follows. Catalyzes the reversible oxidation of malate to oxaloacetate. In Desulforudis audaxviator (strain MP104C), this protein is Malate dehydrogenase.